We begin with the raw amino-acid sequence, 31 residues long: Photosystem II reaction center protein T (31 aa).

The chain crosses the membrane as a helical span at residues 3 to 23 (ALVYVFLLTGTLMVIFFAIFF).

It belongs to the PsbT family. In terms of assembly, PSII is composed of 1 copy each of membrane proteins PsbA, PsbB, PsbC, PsbD, PsbE, PsbF, PsbH, PsbI, PsbJ, PsbK, PsbL, PsbM, PsbT, PsbX, PsbY, PsbZ, Psb30/Ycf12, at least 3 peripheral proteins of the oxygen-evolving complex and a large number of cofactors. It forms dimeric complexes.

It is found in the plastid. Its subcellular location is the chloroplast thylakoid membrane. Functionally, found at the monomer-monomer interface of the photosystem II (PS II) dimer, plays a role in assembly and dimerization of PSII. PSII is a light-driven water plastoquinone oxidoreductase, using light energy to abstract electrons from H(2)O, generating a proton gradient subsequently used for ATP formation. This Pyropia yezoensis (Susabi-nori) protein is Photosystem II reaction center protein T.